The following is an 88-amino-acid chain: Small ribosomal subunit protein uS15 (88 aa).

Belongs to the universal ribosomal protein uS15 family. Part of the 30S ribosomal subunit. Forms a bridge to the 50S subunit in the 70S ribosome, contacting the 23S rRNA.

Functionally, one of the primary rRNA binding proteins, it binds directly to 16S rRNA where it helps nucleate assembly of the platform of the 30S subunit by binding and bridging several RNA helices of the 16S rRNA. Its function is as follows. Forms an intersubunit bridge (bridge B4) with the 23S rRNA of the 50S subunit in the ribosome. This is Small ribosomal subunit protein uS15 from Leptospira borgpetersenii serovar Hardjo-bovis (strain JB197).